A 365-amino-acid polypeptide reads, in one-letter code: Ribosomal RNA large subunit methyltransferase F (365 aa).

The disordered stretch occupies residues 1 to 50; sequence MSKPAVKSVPSATAKTATRAANPRQKAKAPKQAKPEGKGRAKPSKDKPRA. Basic and acidic residues predominate over residues 33-50; that stretch reads AKPEGKGRAKPSKDKPRA.

Belongs to the methyltransferase superfamily. METTL16/RlmF family.

It is found in the cytoplasm. The catalysed reaction is adenosine(1618) in 23S rRNA + S-adenosyl-L-methionine = N(6)-methyladenosine(1618) in 23S rRNA + S-adenosyl-L-homocysteine + H(+). Its function is as follows. Specifically methylates the adenine in position 1618 of 23S rRNA. The polypeptide is Ribosomal RNA large subunit methyltransferase F (Shewanella baltica (strain OS195)).